We begin with the raw amino-acid sequence, 498 residues long: MSFVVTIPEALAAVATDLAGIGSTIGTANAAAAVPTTTVLAAAADEVSAAMAALFSGHAQAYQALSAQAALFHEQFVRALTAGAGSYAAAEAASAAPLEGVLDVINAPALALLGRPLIGNGANGAPGTGANGGDGGILIGNGGAGGSGAAGMPGGNGGAAGLFGNGGAGGAGGNVASGTAGFGGAGGAGGLLYGAGGAGGAGGRAGGGVGGIGGAGGAGGNGGLLFGAGGAGGVGGLAADAGDGGAGGDGGLFFGVGGAGGAGGTGTNVTGGAGGAGGNGGLLFGAGGVGGVGGDGVAFLGTAPGGPGGAGGAGGLFGVGGAGGAGGIGLVGNGGAGGSGGSALLWGDGGAGGAGGVGSTTGGAGGAGGNAGLLVGAGGAGGAGALGGGATGVGGAGGNGGTAGLLFGAGGAGGFGFGGAGGAGGLGGKAGLIGDGGDGGAGGNGTGAKGGDGGAGGGAILVGNGGNGGNAGSGTPNGSAGTGGAGGLLGKNGMNGLP.

The essential for translocation to the cell surface stretch occupies residues 1 to 30; it reads MSFVVTIPEALAAVATDLAGIGSTIGTANA. The PE domain maps to 1–93; that stretch reads MSFVVTIPEA…AGSYAAAEAA (93 aa). The tract at residues 140-260 is interacts with TLR2; the sequence is GNGGAGGSGA…GLFFGVGGAG (121 aa).

Belongs to the mycobacterial PE family. PGRS subfamily. As to quaternary structure, interacts with human TLR2.

Its subcellular location is the secreted. The protein resides in the cell wall. The protein localises to the cell surface. It is found in the cell outer membrane. With respect to regulation, binding of Ca(2+) to PE_PGRS33 induces conformational changes and increases affinity for TLR2. Its function is as follows. Induces TNF-alpha release through human Toll-like receptor 2 (TLR2) signaling pathway, leading to macrophage apoptosis. The signaling pathway involves TLR2-dependent activation of the mitogen-activated protein kinase kinase kinase 5 (ASK1), which activates the p38 and JNK MAPKs, leading to enhanced expression of TNF-alpha and tumor necrosis factor receptor superfamily member 1A (TNFRI) genes. Signals are amplified through classical caspase 8-dependent mitochondrial release of cytochrome c, leading to the activation of caspases 9 and 3. Mediates Ca(2+)-dependent up-regulation of the anti-inflammatory cytokine IL-10. Mediates entry into macrophages in a TLR2-dependent mechanism and activates the TLR2-dependent pro-adhesive pathway. The sequence is that of PE-PGRS family protein PE_PGRS33 from Mycobacterium tuberculosis (strain ATCC 25618 / H37Rv).